We begin with the raw amino-acid sequence, 395 residues long: S-adenosylmethionine synthase (395 aa).

ATP is bound at residue His16. Asp18 lines the Mg(2+) pocket. K(+) is bound at residue Glu44. L-methionine contacts are provided by Glu57 and Gln100. The interval 100 to 110 (QSPDIAQGVDR) is flexible loop. Residues 167 to 169 (DAK), 233 to 234 (RF), Asp242, 248 to 249 (RK), Ala265, and Lys269 contribute to the ATP site. Asp242 lines the L-methionine pocket. An L-methionine-binding site is contributed by Lys273.

Belongs to the AdoMet synthase family. As to quaternary structure, homotetramer; dimer of dimers. The cofactor is Mg(2+). K(+) is required as a cofactor.

It is found in the cytoplasm. The enzyme catalyses L-methionine + ATP + H2O = S-adenosyl-L-methionine + phosphate + diphosphate. It participates in amino-acid biosynthesis; S-adenosyl-L-methionine biosynthesis; S-adenosyl-L-methionine from L-methionine: step 1/1. Functionally, catalyzes the formation of S-adenosylmethionine (AdoMet) from methionine and ATP. The overall synthetic reaction is composed of two sequential steps, AdoMet formation and the subsequent tripolyphosphate hydrolysis which occurs prior to release of AdoMet from the enzyme. The sequence is that of S-adenosylmethionine synthase from Burkholderia lata (strain ATCC 17760 / DSM 23089 / LMG 22485 / NCIMB 9086 / R18194 / 383).